We begin with the raw amino-acid sequence, 243 residues long: UPF0758 protein sll0766 (243 aa).

Residues 113 to 235 (VVDSPEAAAI…HQSLRQCTDL (123 aa)) enclose the MPN domain. Residues His-184, His-186, and Asp-197 each coordinate Zn(2+). Positions 184–197 (HNHPSGGLEPSPED) match the JAMM motif motif.

The protein belongs to the UPF0758 family.

The chain is UPF0758 protein sll0766 from Synechocystis sp. (strain ATCC 27184 / PCC 6803 / Kazusa).